The primary structure comprises 400 residues: Cytoplasmic tRNA 2-thiolation protein 2 (400 aa).

This sequence belongs to the CTU2/NCS2 family.

Its subcellular location is the cytoplasm. It participates in tRNA modification; 5-methoxycarbonylmethyl-2-thiouridine-tRNA biosynthesis. In terms of biological role, plays a central role in 2-thiolation of mcm(5)S(2)U at tRNA wobble positions of tRNA(Lys), tRNA(Glu) and tRNA(Gln). May act by forming a heterodimer with NCS6/CTU1 that ligates sulfur from thiocarboxylated URM1 onto the uridine of tRNAs at wobble position. The sequence is that of Cytoplasmic tRNA 2-thiolation protein 2 from Drosophila virilis (Fruit fly).